A 444-amino-acid chain; its full sequence is Homogentisate 1,2-dioxygenase (444 aa).

H298 serves as the catalytic Proton acceptor. 2 residues coordinate Fe cation: H341 and E347. Positions 356 and 377 each coordinate homogentisate. Residue H377 coordinates Fe cation.

Belongs to the homogentisate dioxygenase family. Hexamer; dimer of trimers. It depends on Fe cation as a cofactor.

The catalysed reaction is homogentisate + O2 = 4-maleylacetoacetate + H(+). It functions in the pathway amino-acid degradation; L-phenylalanine degradation; acetoacetate and fumarate from L-phenylalanine: step 4/6. Involved in the catabolism of homogentisate (2,5-dihydroxyphenylacetate or 2,5-OH-PhAc), a central intermediate in the degradation of phenylalanine and tyrosine. Catalyzes the oxidative ring cleavage of the aromatic ring of homogentisate to yield maleylacetoacetate. In Burkholderia lata (strain ATCC 17760 / DSM 23089 / LMG 22485 / NCIMB 9086 / R18194 / 383), this protein is Homogentisate 1,2-dioxygenase.